The following is a 393-amino-acid chain: Acetate kinase (393 aa).

Asparagine 8 is a binding site for Mg(2+). An ATP-binding site is contributed by lysine 15. Position 91 (arginine 91) interacts with substrate. The Proton donor/acceptor role is filled by aspartate 148. Residues 206–210 (HLGSG), 280–282 (DMR), and 325–329 (GVGEN) contribute to the ATP site. Residue glutamate 376 participates in Mg(2+) binding.

The protein belongs to the acetokinase family. As to quaternary structure, homodimer. The cofactor is Mg(2+). Mn(2+) is required as a cofactor.

It localises to the cytoplasm. It carries out the reaction acetate + ATP = acetyl phosphate + ADP. Its pathway is metabolic intermediate biosynthesis; acetyl-CoA biosynthesis; acetyl-CoA from acetate: step 1/2. In terms of biological role, catalyzes the formation of acetyl phosphate from acetate and ATP. Can also catalyze the reverse reaction. This chain is Acetate kinase, found in Rhizobium meliloti (Ensifer meliloti).